Reading from the N-terminus, the 109-residue chain is Gliadoralin-A (109 aa).

The first 16 residues, M1 to A16, serve as a signal peptide directing secretion. At Q17 the chain carries Pyrrolidone carboxylic acid. The interval Q17–V109 is disordered. Residues P35–V109 show a composition bias toward low complexity. The propeptide occupies R107–V109.

In terms of processing, predominantly proteolytically processed at its C-terminus before secretion to produce the major form gliadoralin A 1-90. Further proteloytically processed after secretion to produce minor forms. Potential substrate of transglutaminase. As to expression, found in saliva (at protein level). Secreted from the submandibular gland.

The protein localises to the secreted. May play a role in the formation of the protective mucosal protein pellicle involved in the reinforcement and protection of oral mucosal epithelial surface. This chain is Gliadoralin-A, found in Rattus norvegicus (Rat).